The sequence spans 708 residues: Fatty acid oxidation complex subunit alpha (708 aa).

The tract at residues 1–190 (MDMEKTFNLT…KMGLVDDAVP (190 aa)) is enoyl-CoA hydratase. Residues 310 to 708 (QKVNKVMVLG…MAEEGTRFFS (399 aa)) form a 3-hydroxyacyl-CoA dehydrogenase region.

It in the N-terminal section; belongs to the enoyl-CoA hydratase/isomerase family. In the central section; belongs to the 3-hydroxyacyl-CoA dehydrogenase family. In terms of assembly, heterotetramer of two alpha chains (FadJ) and two beta chains (FadI).

The protein resides in the cytoplasm. The catalysed reaction is a (3S)-3-hydroxyacyl-CoA = a (2E)-enoyl-CoA + H2O. The enzyme catalyses a 4-saturated-(3S)-3-hydroxyacyl-CoA = a (3E)-enoyl-CoA + H2O. It catalyses the reaction a (3S)-3-hydroxyacyl-CoA + NAD(+) = a 3-oxoacyl-CoA + NADH + H(+). It carries out the reaction (3S)-3-hydroxybutanoyl-CoA = (3R)-3-hydroxybutanoyl-CoA. It participates in lipid metabolism; fatty acid beta-oxidation. In terms of biological role, catalyzes the formation of a hydroxyacyl-CoA by addition of water on enoyl-CoA. Also exhibits 3-hydroxyacyl-CoA epimerase and 3-hydroxyacyl-CoA dehydrogenase activities. The polypeptide is Fatty acid oxidation complex subunit alpha (Shewanella halifaxensis (strain HAW-EB4)).